Reading from the N-terminus, the 76-residue chain is uncharacterized protein (76 aa).

Residues 40-60 (IVLNLVVLVGVVPLTWMFLGQ) form a helical membrane-spanning segment.

It is found in the membrane. This is an uncharacterized protein from Dictyostelium discoideum (Social amoeba).